The following is a 724-amino-acid chain: Propionyl-CoA carboxylase alpha chain, mitochondrial (724 aa).

A mitochondrion-targeting transit peptide spans 1–48; the sequence is MAGQWVRTVALLAARRHWRRSSQQQLLGTLKHAPVYSYQCLVVSRSLS. One can recognise a Biotin carboxylation domain in the interval 58 to 505; sequence TFDKILIANR…STKFLSDVYP (448 aa). Lys61 bears the N6-acetyllysine; alternate mark. Lys61 is modified (N6-succinyllysine; alternate). Lys115 bears the N6-succinyllysine mark. Lys146 carries the N6-acetyllysine; alternate modification. Lys146 is modified (N6-succinyllysine; alternate). Lys150 is modified (N6-acetyllysine). Lys173 serves as a coordination point for ATP. An ATP-grasp domain is found at 177-374; it reads KLLAKRAKVN…LVQEMILVAK (198 aa). Lys184 carries the N6-succinyllysine modification. Lys196 is subject to N6-acetyllysine; alternate. At Lys196 the chain carries N6-succinyllysine; alternate. ATP is bound by residues 205 to 266, Glu257, and Asn292; that span reads AREI…PRHI. Ser248 carries the phosphoserine modification. Position 258 is an N6-succinyllysine (Lys258). An N6-acetyllysine; alternate modification is found at Lys324. Residue Lys324 is modified to N6-succinyllysine; alternate. Glu332, Glu345, and Asn347 together coordinate Mg(2+). Residues Glu332, Glu345, and Asn347 each coordinate Mn(2+). The active site involves Arg349. N6-succinyllysine occurs at positions 381 and 403. Phe405 lines the biotin pocket. Lys492 carries the N6-acetyllysine modification. An N6-succinyllysine mark is found at Lys498, Lys509, Lys554, and Lys644. The Biotinyl-binding domain maps to 645-724; that stretch reads FMLEKVPKDT…GEGDLLVELE (80 aa). Lys690 carries the N6-biotinyllysine; by HLCS modification.

In terms of assembly, the holoenzyme is a dodecamer composed of 6 PCCA/alpha subunits and 6 PCCB/beta subunits. Interacts (via the biotin carboxylation domain) with SIRT4. Interacts with SIRT3 and SIRT5. Requires Mg(2+) as cofactor. Mn(2+) is required as a cofactor. Biotin serves as cofactor. Post-translationally, acetylated. The biotin cofactor is covalently attached to the C-terminal biotinyl-binding domain and is required for the catalytic activity. Biotinylation is catalyzed by HLCS.

The protein resides in the mitochondrion matrix. It carries out the reaction propanoyl-CoA + hydrogencarbonate + ATP = (S)-methylmalonyl-CoA + ADP + phosphate + H(+). The catalysed reaction is butanoyl-CoA + hydrogencarbonate + ATP = (2S)-ethylmalonyl-CoA + ADP + phosphate + H(+). The protein operates within metabolic intermediate metabolism; propanoyl-CoA degradation; succinyl-CoA from propanoyl-CoA: step 1/3. This is one of the 2 subunits of the biotin-dependent propionyl-CoA carboxylase (PCC), a mitochondrial enzyme involved in the catabolism of odd chain fatty acids, branched-chain amino acids isoleucine, threonine, methionine, and valine and other metabolites. Propionyl-CoA carboxylase catalyzes the carboxylation of propionyl-CoA/propanoyl-CoA to D-methylmalonyl-CoA/(S)-methylmalonyl-CoA. Within the holoenzyme, the alpha subunit catalyzes the ATP-dependent carboxylation of the biotin carried by the biotin carboxyl carrier (BCC) domain, while the beta subunit then transfers the carboxyl group from carboxylated biotin to propionyl-CoA. Propionyl-CoA carboxylase also significantly acts on butyryl-CoA/butanoyl-CoA, which is converted to ethylmalonyl-CoA/(2S)-ethylmalonyl-CoA. Other alternative minor substrates include (2E)-butenoyl-CoA/crotonoyl-CoA. In Mus musculus (Mouse), this protein is Propionyl-CoA carboxylase alpha chain, mitochondrial.